A 398-amino-acid polypeptide reads, in one-letter code: Bifunctional enzyme IspD/IspF (398 aa).

Residues 1–234 (MAKSQRTAVV…ARLAAQLGDI (234 aa)) are 2-C-methyl-D-erythritol 4-phosphate cytidylyltransferase. Residues 235–398 (RTGTGYDVHA…LPFNEKTWSV (164 aa)) form a 2-C-methyl-D-erythritol 2,4-cyclodiphosphate synthase region. A divalent metal cation contacts are provided by D241 and H243. Residues 241-243 (DVH) and 267-268 (HS) each bind 4-CDP-2-C-methyl-D-erythritol 2-phosphate. H275 serves as a coordination point for a divalent metal cation. 4-CDP-2-C-methyl-D-erythritol 2-phosphate-binding positions include 289–291 (DIG), 365–368 (TTSE), F372, and R375.

In the N-terminal section; belongs to the IspD/TarI cytidylyltransferase family. IspD subfamily. It in the C-terminal section; belongs to the IspF family. It depends on a divalent metal cation as a cofactor.

The catalysed reaction is 2-C-methyl-D-erythritol 4-phosphate + CTP + H(+) = 4-CDP-2-C-methyl-D-erythritol + diphosphate. It carries out the reaction 4-CDP-2-C-methyl-D-erythritol 2-phosphate = 2-C-methyl-D-erythritol 2,4-cyclic diphosphate + CMP. The protein operates within isoprenoid biosynthesis; isopentenyl diphosphate biosynthesis via DXP pathway; isopentenyl diphosphate from 1-deoxy-D-xylulose 5-phosphate: step 2/6. Its pathway is isoprenoid biosynthesis; isopentenyl diphosphate biosynthesis via DXP pathway; isopentenyl diphosphate from 1-deoxy-D-xylulose 5-phosphate: step 4/6. Functionally, bifunctional enzyme that catalyzes the formation of 4-diphosphocytidyl-2-C-methyl-D-erythritol from CTP and 2-C-methyl-D-erythritol 4-phosphate (MEP) (IspD), and catalyzes the conversion of 4-diphosphocytidyl-2-C-methyl-D-erythritol 2-phosphate (CDP-ME2P) to 2-C-methyl-D-erythritol 2,4-cyclodiphosphate (ME-CPP) with a corresponding release of cytidine 5-monophosphate (CMP) (IspF). In Bradyrhizobium diazoefficiens (strain JCM 10833 / BCRC 13528 / IAM 13628 / NBRC 14792 / USDA 110), this protein is Bifunctional enzyme IspD/IspF.